The primary structure comprises 556 residues: Formate--tetrahydrofolate ligase (556 aa).

65–72 (TPAGEGKS) contacts ATP.

The protein belongs to the formate--tetrahydrofolate ligase family.

It catalyses the reaction (6S)-5,6,7,8-tetrahydrofolate + formate + ATP = (6R)-10-formyltetrahydrofolate + ADP + phosphate. The protein operates within one-carbon metabolism; tetrahydrofolate interconversion. The sequence is that of Formate--tetrahydrofolate ligase from Streptococcus pneumoniae (strain Taiwan19F-14).